We begin with the raw amino-acid sequence, 446 residues long: MTAKNVGLPSTNAKLRGFIDQNFSPSKGNISLVAFPVSSTNSPTKILPKTLGPINVNVGPQMIISTPQRIANSGSVLIGNPYTPAPAMVTQTHIAEAAGWVPSDRKRAREFIDSDFSESKRSKKGDKNGKGLRHFSMKVCEKVQRKGTTSYNEVADELVSEFTNSNNHLAADSAYDQENIRRRVYDALNVLMAMNIISSLPTGKKRNQVDCNSAQECQNLEIEKQRRIERIKQKRAQLQELLLQQIAFKNLVQRNRQNEQQNQGPPAVNSTIQLPFIIINTSRKTVIDCSISSDKFEYLFNFDNTFEIHDDIEVLKRMGMSFGLESGKCSLEDLKIARSLVPKALEGYITDISTGPSWLNQGLLLNSTQSVSNLDPTTGATVPQSSVNQGLCLDAEVALATGQLPASNSHQSSSAASHFSESRGETPCSFNDEDEEDEEEDPSSPE.

Threonine 2 bears the N-acetylthreonine mark. Phosphoserine; by CDK2 occurs at positions 24 and 42. Positions 60–82 (PQMIISTPQRIANSGSVLIGNPY) are interaction with CEBPA. The short motif at 103 to 118 (SDRKRAREFIDSDFSE) is the Nuclear localization signal element. Serine 122 carries the phosphoserine modification. A DNA-binding region spans residues 129 to 210 (GKGLRHFSMK…PTGKKRNQVD (82 aa)). The DEF box signature appears at 176–210 (DQENIRRRVYDALNVLMAMNIISSLPTGKKRNQVD). Residues 219–292 (NLEIEKQRRI…RKTVIDCSIS (74 aa)) are dimerization. The interval 229 to 261 (ERIKQKRAQLQELLLQQIAFKNLVQRNRQNEQQ) is DCB1. The tract at residues 274–330 (LPFIIINTSRKTVIDCSISSDKFEYLFNFDNTFEIHDDIEVLKRMGMSFGLESGKCS) is DCB2. Positions 404–446 (LPASNSHQSSSAASHFSESRGETPCSFNDEDEEDEEEDPSSPE) are disordered. Positions 406-419 (ASNSHQSSSAASHF) are enriched in low complexity. Acidic residues predominate over residues 431 to 446 (NDEDEEDEEEDPSSPE).

This sequence belongs to the E2F/DP family. As to quaternary structure, component of the DRTF1/E2F transcription factor complex. Forms heterodimers with E2F family members. The complex can interact with hypophosphorylated retinoblastoma protein RB1 and related proteins (RBL1 and RBL2) that inhibit the E2F transactivation domain. During the cell cycle, RB becomes phosphorylated in mid-to-late G1 phase, detaches from the DRTF1/E2F complex rendering E2F transcriptionally active. Interacts with GMCL. Component of the DREAM complex (also named LINC complex) at least composed of E2F4, E2F5, LIN9, LIN37, LIN52, LIN54, MYBL1, MYBL2, RBL1, RBL2, RBBP4, TFDP1 and TFDP2. The complex exists in quiescent cells where it represses cell cycle-dependent genes. It dissociates in S phase when LIN9, LIN37, LIN52 and LIN54 form a subcomplex that binds to MYBL2. The complex TFDP2:E2F1 interacts with CEBPA; the interaction prevents CEBPA binding to target gene promoters and represses its transcriptional activity. Post-translationally, phosphorylation by E2F1-bound cyclin A-CDK2, in the S phase, inhibits E2F-mediated DNA binding and transactivation. In terms of tissue distribution, expressed in all tissues examined. Highest levels in spleen and heart.

Its subcellular location is the nucleus. Can stimulate E2F-dependent transcription. Binds DNA cooperatively with E2F family members through the E2 recognition site, 5'-TTTC[CG]CGC-3', found in the promoter region of a number of genes whose products are involved in cell cycle regulation or in DNA replication. The TFDP2:E2F complex functions in the control of cell-cycle progression from G1 to S phase. The E2F1:DP complex appears to mediate both cell proliferation and apoptosis. Blocks adipocyte differentiation by repressing CEBPA binding to its target gene promoters. The chain is Transcription factor Dp-2 (Tfdp2) from Mus musculus (Mouse).